The following is a 465-amino-acid chain: Nuclear pore complex protein NUP50B (465 aa).

Disordered stretches follow at residues 1 to 44 (MGDS…TFNT) and 59 to 244 (RRTD…FHQH). Residue Gly-2 is modified to N-acetylglycine. The segment covering 26–35 (GLDDDDEDTS) has biased composition (acidic residues). A compositionally biased stretch (low complexity) spans 81 to 97 (PFTAPAPSTAAAETTKP). 3 stretches are compositionally biased toward basic and acidic residues: residues 105 to 127 (TLAD…KSDA), 141 to 157 (ISAK…KEMS), and 216 to 233 (TEKE…EKNG). Phosphoserine is present on Ser-125. Repeat copies occupy residues 266–267 (FG), 286–287 (FG), and 297–298 (FG). Positions 266–298 (FGLVPQEGSTGSGSEQSSFSFGQANNGNSSLFG) are 3 X 2 AA repeats of F-G. Disordered regions lie at residues 308-330 (KSTE…GEEN) and 439-465 (HKDS…AEDA). Thr-455 carries the phosphothreonine modification. The span at 456 to 465 (PENSPSAEDA) shows a compositional bias: polar residues. Ser-459 carries the phosphoserine modification.

Part of the nuclear pore complex (NPC). The NPC has an eight-fold symmetrical structure comprising a central transport channel and two rings, the cytoplasmic and nuclear rings, to which eight filaments are attached. The cytoplasmic filaments have loose ends, while the nuclear filaments are joined in a distal ring, forming a nuclear basket. NPCs are highly dynamic in configuration and composition, and can be devided in 3 subcomplexes, the NUP62 subcomplex, the NUP107-160 subcomplex and the NUP93 subcomplex, containing approximately 30 different nucleoporin proteins.

It localises to the nucleus. The protein resides in the nucleoplasm. Its subcellular location is the nuclear pore complex. Functionally, probably involved in nucleocytoplasmic transport via its interactions with importins and Ran, rather than by forming part of the nuclear pore complex (NPC) scaffolding. This is Nuclear pore complex protein NUP50B from Arabidopsis thaliana (Mouse-ear cress).